The primary structure comprises 521 residues: C-22 sterol desaturase erg5 (521 aa).

A helical membrane pass occupies residues 30–50 (AVLNGFTFWKALATLFFAAVI).

It belongs to the cytochrome P450 family. Requires heme as cofactor.

It localises to the endoplasmic reticulum membrane. It catalyses the reaction 5-dehydroepisterol + NADPH + O2 + H(+) = ergosta-5,7,22,24(28)-tetraen-3beta-ol + NADP(+) + 2 H2O. It functions in the pathway steroid metabolism; ergosterol biosynthesis. In terms of biological role, C-22 sterol desaturase; part of the third module of ergosterol biosynthesis pathway that includes the late steps of the pathway. Erg5 converts 5-dehydroepisterol into ergosta-5,7,22,24(28)-tetraen-3beta-ol by forming the C-22(23) double bond in the sterol side chain. The third module or late pathway involves the ergosterol synthesis itself through consecutive reactions that mainly occur in the endoplasmic reticulum (ER) membrane. Firstly, the squalene synthase erg9 catalyzes the condensation of 2 farnesyl pyrophosphate moieties to form squalene, which is the precursor of all steroids. Squalene synthase is crucial for balancing the incorporation of farnesyl diphosphate (FPP) into sterol and nonsterol isoprene synthesis. Secondly, squalene is converted into lanosterol by the consecutive action of the squalene epoxidase erg1 and the lanosterol synthase erg7. Then, the delta(24)-sterol C-methyltransferase erg6 methylates lanosterol at C-24 to produce eburicol. Eburicol is the substrate of the sterol 14-alpha demethylase encoded by cyp51A and cyp51B, to yield 4,4,24-trimethyl ergosta-8,14,24(28)-trienol. The C-14 reductase erg24 then reduces the C14=C15 double bond which leads to 4,4-dimethylfecosterol. A sequence of further demethylations at C-4, involving the C-4 demethylation complex containing the C-4 methylsterol oxidases erg25A or erg25B, the sterol-4-alpha-carboxylate 3-dehydrogenase erg26 and the 3-keto-steroid reductase erg27, leads to the production of fecosterol via 4-methylfecosterol. The C-8 sterol isomerase erg2 then catalyzes the reaction which results in unsaturation at C-7 in the B ring of sterols and thus converts fecosterol to episterol. The sterol-C5-desaturase erg3B then catalyzes the introduction of a C-5 double bond in the B ring to produce 5-dehydroepisterol. The 2 other sterol-C5-desaturases, erg3A and erg3C, seem to be less important in ergosterol biosynthesis. The C-22 sterol desaturase erg5 further converts 5-dehydroepisterol into ergosta-5,7,22,24(28)-tetraen-3beta-ol by forming the C-22(23) double bond in the sterol side chain. Finally, ergosta-5,7,22,24(28)-tetraen-3beta-ol is substrate of the C-24(28) sterol reductases erg4A and erg4B to produce ergosterol. Possible alternative sterol biosynthetic pathways might exist from fecosterol to ergosterol, depending on the activities of the erg3 isoforms. The chain is C-22 sterol desaturase erg5 from Aspergillus fumigatus (strain ATCC MYA-4609 / CBS 101355 / FGSC A1100 / Af293) (Neosartorya fumigata).